The sequence spans 241 residues: MSMLFYTLITALLIGVQAEPYTDSNLPEGDSVPEAHWTKLQHSLDTALRRARSAPAAPIAARVTGQTRNITVDPRLFKKRKLRSPRVLFSTQPPPTSSDTLDLDFQAHGTISFNRTHRSKRSSTHPVFQMGEFSVCDSVSVWVGDKTTATDIKGNEVTVLGEVNINNSVFKQYFFETKCRARNPVESGCRGIDSKHWNSYCTTTHTFVKALTTDDRQAAWRFIRIDTACVCVLTRKAPRRG.

An N-terminal signal peptide occupies residues 1–18 (MSMLFYTLITALLIGVQA). Positions 19-121 (EPYTDSNLPE…SFNRTHRSKR (103 aa)) are excised as a propeptide. N69, N114, and N166 each carry an N-linked (GlcNAc...) asparagine glycan. 3 cysteine pairs are disulfide-bonded: C136–C201, C179–C229, and C189–C231.

The protein belongs to the NGF-beta family. Homodimer. The homodimer interacts with a single NTRK1 chain. The homodimer interacts with a single NGFR chain. The NGF dimer interacts with a single SORCS2 chain (via extracellular domain). The NGF precursor (proNGF) binds to a receptor complex formed by SORT1 and NGFR, which leads to NGF endocytosis. Both mature NGF and the immature NGF precursor (proNGF) interact with SORCS2 and with the heterodimer formed by SORCS2 and NGFR (via extracellular domains). The NGF precursor (proNGF) has much higher affinity for SORCS2 than mature NGF. The NGF precursor (proNGF) has much higher affinity for SORT1 than mature NGF. Interacts with ADAM10 in a divalent cation-dependent manner. Interacts with SORCS3.

It is found in the secreted. The protein resides in the endosome lumen. In terms of biological role, nerve growth factor is important for the development and maintenance of the sympathetic and sensory nervous systems. Extracellular ligand for the NTRK1 and NGFR receptors, activates cellular signaling cascades through those receptor tyrosine kinase to regulate neuronal proliferation, differentiation and survival. Inhibits metalloproteinase dependent proteolysis of platelet glycoprotein VI. The polypeptide is Beta-nerve growth factor (NGF) (Mastomys natalensis (African soft-furred rat)).